The following is a 504-amino-acid chain: 2-isopropylmalate synthase (504 aa).

The region spanning 6 to 267 (IIIFDTTLRD…YTGIISKEIY (262 aa)) is the Pyruvate carboxyltransferase domain. Mn(2+) is bound by residues Asp-15, His-201, His-203, and Asn-237. Residues 391-504 (EITDLLQSSG…LNSYLRIHKN (114 aa)) are regulatory domain.

It belongs to the alpha-IPM synthase/homocitrate synthase family. LeuA type 1 subfamily. In terms of assembly, homodimer. Mn(2+) is required as a cofactor.

Its subcellular location is the cytoplasm. The enzyme catalyses 3-methyl-2-oxobutanoate + acetyl-CoA + H2O = (2S)-2-isopropylmalate + CoA + H(+). The protein operates within amino-acid biosynthesis; L-leucine biosynthesis; L-leucine from 3-methyl-2-oxobutanoate: step 1/4. In terms of biological role, catalyzes the condensation of the acetyl group of acetyl-CoA with 3-methyl-2-oxobutanoate (2-ketoisovalerate) to form 3-carboxy-3-hydroxy-4-methylpentanoate (2-isopropylmalate). The sequence is that of 2-isopropylmalate synthase from Campylobacter concisus (strain 13826).